Consider the following 100-residue polypeptide: Replication restart protein PriB (100 aa).

An SSB domain is found at 1-100 (MTNRIELSGV…VLHADKISQI (100 aa)).

The protein belongs to the PriB family. In terms of assembly, homodimer. Interacts with PriA and DnaT. Component of the replication restart primosome. Primosome assembly occurs via a 'hand-off' mechanism. PriA binds to replication forks, subsequently PriB then DnaT bind; DnaT then displaces ssDNA to generate the helicase loading substrate.

In terms of biological role, involved in the restart of stalled replication forks, which reloads the replicative helicase on sites other than the origin of replication; the PriA-PriB pathway is the major replication restart pathway. During primosome assembly it facilitates complex formation between PriA and DnaT on DNA; stabilizes PriA on DNA. Stimulates the DNA unwinding activity of PriA helicase. In Vibrio cholerae serotype O1 (strain ATCC 39315 / El Tor Inaba N16961), this protein is Replication restart protein PriB.